The primary structure comprises 551 residues: BAG family molecular chaperone regulator 8, chloroplastic (551 aa).

The segment covering 1 to 19 has biased composition (basic residues); the sequence is MASHHHHNHNHVCSRHQNH. A disordered region spans residues 1-46; the sequence is MASHHHHNHNHVCSRHQNHHNNTPQFATSPNCCNKSNHPSPPPAED. The N-terminal 52 residues, 1–52, are a transit peptide targeting the chloroplast; the sequence is MASHHHHNHNHVCSRHQNHHNNTPQFATSPNCCNKSNHPSPPPAEDNLLHLV. Positions 20–38 are enriched in polar residues; it reads HNNTPQFATSPNCCNKSNH. The region spanning 131–160 is the IQ domain; sequence RDSAARVIQTHFRSYLVHRSISFRQLKELA. A BAG domain is found at 147 to 228; it reads VHRSISFRQL…RFVQYVDDCV (82 aa). The segment at 246 to 281 is disordered; the sequence is GKKPQGFGTSSEDEDNNADMSDDSEEVPVSSIDKRK. Residues 256–271 show a composition bias toward acidic residues; the sequence is SEDEDNNADMSDDSEE. Position 332 is a phosphoserine (Ser332). 2 disordered regions span residues 414-433 and 450-551; these read DEGKRRSSKTGSRVLVKGSG and NVYK…KMEP. Residues 479-499 are compositionally biased toward basic and acidic residues; it reads GEEKGNVNEVEEIKYVPKENE. Over residues 500-513 the composition is skewed to acidic residues; sequence SFEEEEEKETDSEN. The span at 522–534 shows a compositional bias: basic and acidic residues; sequence EGDKRVTKKEVQH.

In terms of assembly, binds to the ATPase domain of HSP70/HSC70 chaperones.

Its subcellular location is the plastid. The protein localises to the chloroplast. Co-chaperone that regulates diverse cellular pathways, such as programmed cell death and stress responses. This is BAG family molecular chaperone regulator 8, chloroplastic (BAG1) from Arabidopsis thaliana (Mouse-ear cress).